The following is a 950-amino-acid chain: Bifunctional glutamine synthetase adenylyltransferase/adenylyl-removing enzyme (950 aa).

An adenylyl removase region spans residues 1 to 443; it reads MSLPSPLLPV…VFVTLIGDEE (443 aa). The interval 450–950 is adenylyl transferase; the sequence is ERHFNELWDM…WQEWLESSTI (501 aa).

It belongs to the GlnE family. The cofactor is Mg(2+).

The catalysed reaction is [glutamine synthetase]-O(4)-(5'-adenylyl)-L-tyrosine + phosphate = [glutamine synthetase]-L-tyrosine + ADP. It catalyses the reaction [glutamine synthetase]-L-tyrosine + ATP = [glutamine synthetase]-O(4)-(5'-adenylyl)-L-tyrosine + diphosphate. In terms of biological role, involved in the regulation of glutamine synthetase GlnA, a key enzyme in the process to assimilate ammonia. When cellular nitrogen levels are high, the C-terminal adenylyl transferase (AT) inactivates GlnA by covalent transfer of an adenylyl group from ATP to specific tyrosine residue of GlnA, thus reducing its activity. Conversely, when nitrogen levels are low, the N-terminal adenylyl removase (AR) activates GlnA by removing the adenylyl group by phosphorolysis, increasing its activity. The regulatory region of GlnE binds the signal transduction protein PII (GlnB) which indicates the nitrogen status of the cell. The sequence is that of Bifunctional glutamine synthetase adenylyltransferase/adenylyl-removing enzyme from Vibrio vulnificus (strain YJ016).